Here is a 265-residue protein sequence, read N- to C-terminus: Protein Pars_0096 (265 aa).

The protein belongs to the CinA family.

The chain is Protein Pars_0096 from Pyrobaculum arsenaticum (strain DSM 13514 / JCM 11321 / PZ6).